We begin with the raw amino-acid sequence, 432 residues long: MTNASTESFFNRSLADVDPDIFGAIGKELGRQRHEIELIASENIVSRAVLEAQGSIMTNKYAEGYPGKRYYGGCQFVDIAEELAIERAKKLFGVNFANVQPNSGSQMNQAVFLALLQPGDTFMGLDLNSGGHLTHGSPVNMSGKWFNVVSYGVREGDNLLDMDEVARKAEETKPKLIIAGGTAYSRIWDWKRFREIADSVGAYLMVDMAHIAGLVAGGVHPSPFPHCHVATTTTHKSLRGPRGGVILTNDEDLAKKFNSAVFPGLQGGPLMHIIAAKAVAFGEALQPEFKDYAAQVVKNAKALAETLISGGLDVVSGGTDNHLMLVDLRKKNATGKRAEAALGRAYVTCNKNGIPFDPEKPFVTSGVRLGAPAGTTRGFKEAEFREIGNLIVEVLDGLKVANSDEGNAAVEAAVRGKVVSLTDRFPMYGYMG.

Residues leucine 127 and 131–133 (GHL) each bind (6S)-5,6,7,8-tetrahydrofolate. Lysine 236 carries the N6-(pyridoxal phosphate)lysine modification.

This sequence belongs to the SHMT family. Homodimer. It depends on pyridoxal 5'-phosphate as a cofactor.

The protein resides in the cytoplasm. It carries out the reaction (6R)-5,10-methylene-5,6,7,8-tetrahydrofolate + glycine + H2O = (6S)-5,6,7,8-tetrahydrofolate + L-serine. Its pathway is one-carbon metabolism; tetrahydrofolate interconversion. It functions in the pathway amino-acid biosynthesis; glycine biosynthesis; glycine from L-serine: step 1/1. Catalyzes the reversible interconversion of serine and glycine with tetrahydrofolate (THF) serving as the one-carbon carrier. This reaction serves as the major source of one-carbon groups required for the biosynthesis of purines, thymidylate, methionine, and other important biomolecules. Also exhibits THF-independent aldolase activity toward beta-hydroxyamino acids, producing glycine and aldehydes, via a retro-aldol mechanism. The chain is Serine hydroxymethyltransferase from Rhizobium johnstonii (strain DSM 114642 / LMG 32736 / 3841) (Rhizobium leguminosarum bv. viciae).